Here is a 159-residue protein sequence, read N- to C-terminus: 2-C-methyl-D-erythritol 2,4-cyclodiphosphate synthase (159 aa).

Residues aspartate 8 and histidine 10 each contribute to the a divalent metal cation site. 4-CDP-2-C-methyl-D-erythritol 2-phosphate-binding positions include 8 to 10 and 34 to 35; these read DVH and HS. Histidine 42 is an a divalent metal cation binding site. Residues 56–58, 61–65, 100–106, 132–135, phenylalanine 139, and arginine 142 contribute to the 4-CDP-2-C-methyl-D-erythritol 2-phosphate site; these read DIG, FPDTD, AQAPKML, and TTTE.

The protein belongs to the IspF family. As to quaternary structure, homotrimer. Requires a divalent metal cation as cofactor.

It catalyses the reaction 4-CDP-2-C-methyl-D-erythritol 2-phosphate = 2-C-methyl-D-erythritol 2,4-cyclic diphosphate + CMP. It functions in the pathway isoprenoid biosynthesis; isopentenyl diphosphate biosynthesis via DXP pathway; isopentenyl diphosphate from 1-deoxy-D-xylulose 5-phosphate: step 4/6. In terms of biological role, involved in the biosynthesis of isopentenyl diphosphate (IPP) and dimethylallyl diphosphate (DMAPP), two major building blocks of isoprenoid compounds. Catalyzes the conversion of 4-diphosphocytidyl-2-C-methyl-D-erythritol 2-phosphate (CDP-ME2P) to 2-C-methyl-D-erythritol 2,4-cyclodiphosphate (ME-CPP) with a corresponding release of cytidine 5-monophosphate (CMP). This chain is 2-C-methyl-D-erythritol 2,4-cyclodiphosphate synthase, found in Escherichia coli O127:H6 (strain E2348/69 / EPEC).